The primary structure comprises 318 residues: Methionyl-tRNA formyltransferase (318 aa).

110–113 provides a ligand contact to (6S)-5,6,7,8-tetrahydrofolate; the sequence is SLLP.

This sequence belongs to the Fmt family.

It carries out the reaction L-methionyl-tRNA(fMet) + (6R)-10-formyltetrahydrofolate = N-formyl-L-methionyl-tRNA(fMet) + (6S)-5,6,7,8-tetrahydrofolate + H(+). In terms of biological role, attaches a formyl group to the free amino group of methionyl-tRNA(fMet). The formyl group appears to play a dual role in the initiator identity of N-formylmethionyl-tRNA by promoting its recognition by IF2 and preventing the misappropriation of this tRNA by the elongation apparatus. The sequence is that of Methionyl-tRNA formyltransferase from Lacticaseibacillus casei (strain BL23) (Lactobacillus casei).